The following is a 672-amino-acid chain: 2,4-dienoyl-CoA reductase [(2E)-enoyl-CoA-producing] (672 aa).

Residues 25–27 (SMH), Gly-59, and Gln-101 contribute to the FMN site. The Proton donor role is filled by Tyr-167. Arg-176 contributes to the substrate binding site. Arg-215 contacts FMN. 253–256 (HEAR) provides a ligand contact to substrate. FMN-binding positions include Arg-289 and 311–312 (AR). The [4Fe-4S] cluster site is built by Cys-335 and Cys-338. Position 340 (Gln-340) interacts with FAD. Gln-340 provides a ligand contact to NADP(+). [4Fe-4S] cluster is bound by residues Cys-342 and Cys-354. Ala-385, Asp-404, Gln-412, Lys-422, and Val-449 together coordinate FAD. 563-564 (RK) serves as a coordination point for NADP(+). Lys-567 and Trp-578 together coordinate substrate. Residues Gly-649 and 656–658 (LDA) contribute to the FAD site. An NADP(+)-binding site is contributed by 654–656 (MEL).

The protein in the N-terminal section; belongs to the NADH:flavin oxidoreductase/NADH oxidase family. In terms of assembly, monomer. The cofactor is FMN. FAD is required as a cofactor. [4Fe-4S] cluster serves as cofactor.

It catalyses the reaction a 4,5-saturated-(2E)-enoyl-CoA + NADP(+) = a (2E,4E)-dienoyl-CoA + NADPH + H(+). The catalysed reaction is a (2E,4Z)-dienoyl-CoA + NADPH + H(+) = a 4,5-saturated-(2E)-enoyl-CoA + NADP(+). The enzyme catalyses (2E)-decenoyl-CoA + NADP(+) = (2E,4E)-decadienoyl-CoA + NADPH + H(+). It carries out the reaction (2E)-decenoyl-CoA + NADP(+) = (2E,4Z)-decadienoyl-CoA + NADPH + H(+). Its pathway is lipid metabolism; fatty acid beta-oxidation. Its activity is regulated as follows. Is non-competitively inhibited by NADH. Its function is as follows. Functions as an auxiliary enzyme in the beta-oxidation of unsaturated fatty acids with double bonds at even carbon positions. Catalyzes the NADPH-dependent reduction of the C4-C5 double bond of the acyl chain of 2,4-dienoyl-CoA to yield 2-trans-enoyl-CoA. Acts on both isomers, 2-trans,4-cis- and 2-trans,4-trans-decadienoyl-CoA, with almost equal efficiency. Is not active with NADH instead of NADPH. Does not show cis-&gt;trans isomerase activity. This Escherichia coli (strain K12) protein is 2,4-dienoyl-CoA reductase [(2E)-enoyl-CoA-producing].